The chain runs to 188 residues: MAIRRILRIDDAEDRKILKMQCRPVKLPDRNLKQLVADMFETMHAANGVGLAAPQIGIPIQLCIIEIPPEYEEQPDGSLIEVNPAEPYVLINPRIVKTSGEEIMRDEGCLSLPGWYGMVPRQTWVTVEFQDLSGKHHRLRRADGLLGWAIQHEVDHLHGILFTERIRDLSTLRDITKEREAQPVEAKA.

Fe cation-binding residues include cysteine 109 and histidine 152. Residue glutamate 153 is part of the active site. Fe cation is bound at residue histidine 156.

It belongs to the polypeptide deformylase family. Fe(2+) is required as a cofactor.

It carries out the reaction N-terminal N-formyl-L-methionyl-[peptide] + H2O = N-terminal L-methionyl-[peptide] + formate. Functionally, removes the formyl group from the N-terminal Met of newly synthesized proteins. Requires at least a dipeptide for an efficient rate of reaction. N-terminal L-methionine is a prerequisite for activity but the enzyme has broad specificity at other positions. This is Peptide deformylase from Chloroflexus aggregans (strain MD-66 / DSM 9485).